We begin with the raw amino-acid sequence, 238 residues long: UDP-2,3-diacylglucosamine hydrolase (238 aa).

The Mn(2+) site is built by D8, H10, D41, N78, and H113. 78–79 (NR) serves as a coordination point for substrate. The substrate site is built by D121, S159, N163, K166, and H194. Residues H194 and H196 each coordinate Mn(2+).

It belongs to the LpxH family. Requires Mn(2+) as cofactor.

Its subcellular location is the cell inner membrane. It carries out the reaction UDP-2-N,3-O-bis[(3R)-3-hydroxytetradecanoyl]-alpha-D-glucosamine + H2O = 2-N,3-O-bis[(3R)-3-hydroxytetradecanoyl]-alpha-D-glucosaminyl 1-phosphate + UMP + 2 H(+). It functions in the pathway glycolipid biosynthesis; lipid IV(A) biosynthesis; lipid IV(A) from (3R)-3-hydroxytetradecanoyl-[acyl-carrier-protein] and UDP-N-acetyl-alpha-D-glucosamine: step 4/6. Its function is as follows. Hydrolyzes the pyrophosphate bond of UDP-2,3-diacylglucosamine to yield 2,3-diacylglucosamine 1-phosphate (lipid X) and UMP by catalyzing the attack of water at the alpha-P atom. Involved in the biosynthesis of lipid A, a phosphorylated glycolipid that anchors the lipopolysaccharide to the outer membrane of the cell. The chain is UDP-2,3-diacylglucosamine hydrolase from Shewanella piezotolerans (strain WP3 / JCM 13877).